The chain runs to 423 residues: uncharacterized protein (423 aa).

Ser-51, Asp-138, and Asn-150 together coordinate substrate. ATP contacts are provided by residues 170–171 (TD) and 214–220 (TGGMRTK). Positions 315–406 (KGAIIIDENS…EKIHDVLGYS (92 aa)) constitute a PUA domain.

The protein belongs to the glutamate 5-kinase family.

Its subcellular location is the cytoplasm. This is an uncharacterized protein from Saccharomyces cerevisiae (strain ATCC 204508 / S288c) (Baker's yeast).